The sequence spans 461 residues: D-phenylhydantoinase (461 aa).

3 residues coordinate a divalent metal cation: His59, His61, and Lys151. An N6-carboxylysine modification is found at Lys151. Tyr156 serves as a coordination point for substrate. A divalent metal cation contacts are provided by His182 and His239. Residue Ser286 coordinates substrate. Asp313 serves as a coordination point for a divalent metal cation. Asn335 serves as a coordination point for substrate.

It belongs to the metallo-dependent hydrolases superfamily. Hydantoinase/dihydropyrimidinase family. Homotetramer. A divalent metal cation serves as cofactor. Post-translationally, carboxylation allows a single lysine to coordinate two divalent metal cations.

It catalyses the reaction D-5-phenylhydantoin + H2O = N-carbamoyl-D-phenylglycine + H(+). Functionally, catalyzes the stereospecific hydrolysis of the cyclic amide bond of D-hydantoin derivatives with an aromatic side chains at the 5'-position. Has no activity on dihydropyrimidines. The physiological function is unknown. This chain is D-phenylhydantoinase, found in Escherichia coli O9:H4 (strain HS).